Reading from the N-terminus, the 354-residue chain is Uroporphyrinogen decarboxylase (354 aa).

Residues Arg-27–Arg-31, Asp-77, Tyr-154, Thr-209, and His-327 each bind substrate.

Belongs to the uroporphyrinogen decarboxylase family. Homodimer.

The protein localises to the cytoplasm. The enzyme catalyses uroporphyrinogen III + 4 H(+) = coproporphyrinogen III + 4 CO2. Its pathway is porphyrin-containing compound metabolism; protoporphyrin-IX biosynthesis; coproporphyrinogen-III from 5-aminolevulinate: step 4/4. Its function is as follows. Catalyzes the decarboxylation of four acetate groups of uroporphyrinogen-III to yield coproporphyrinogen-III. This Salmonella paratyphi A (strain ATCC 9150 / SARB42) protein is Uroporphyrinogen decarboxylase.